The primary structure comprises 469 residues: Probable Xaa-Pro aminopeptidase PEPP (469 aa).

Mn(2+)-binding residues include D264, D275, E398, and E438.

This sequence belongs to the peptidase M24B family. The cofactor is Mn(2+).

The enzyme catalyses Release of any N-terminal amino acid, including proline, that is linked to proline, even from a dipeptide or tripeptide.. Functionally, catalyzes the removal of a penultimate prolyl residue from the N-termini of peptides. In Ajellomyces capsulatus (strain G186AR / H82 / ATCC MYA-2454 / RMSCC 2432) (Darling's disease fungus), this protein is Probable Xaa-Pro aminopeptidase PEPP (PEPP).